A 122-amino-acid chain; its full sequence is Large ribosomal subunit protein uL14 (122 aa).

It belongs to the universal ribosomal protein uL14 family. Part of the 50S ribosomal subunit. Forms a cluster with proteins L3 and L19. In the 70S ribosome, L14 and L19 interact and together make contacts with the 16S rRNA in bridges B5 and B8.

Binds to 23S rRNA. Forms part of two intersubunit bridges in the 70S ribosome. The protein is Large ribosomal subunit protein uL14 of Shewanella frigidimarina (strain NCIMB 400).